The chain runs to 428 residues: Cytochrome bc complex cytochrome b subunit (428 aa).

Low complexity-rich tracts occupy residues 1 to 15 (MAENTPKPAAGTAPA) and 21 to 52 (APGAAKPAAPKAARPGAAKPAAKPAAPRAAAP). Residues 1–72 (MAENTPKPAA…RPDPNPFKDS (72 aa)) are disordered. Over residues 59–72 (PPVDRPDPNPFKDS) the composition is skewed to basic and acidic residues. The helical transmembrane segment at 110–130 (YFGGLGLFFFVIQILTGLLLL) threads the bilayer. Residues histidine 161 and histidine 175 each coordinate heme b. 6 helical membrane-spanning segments follow: residues 162 to 182 (AWSANLMIMMLFIHMFSTFFM), 193 to 213 (WVSGFVLLLLSLGFGFTGYLL), 260 to 280 (LHVVLLPGLVMLVLAAHLTLV), 312 to 331 (GIGWLIGFALLIYLAVMFPW), 369 to 389 (ELLAIILFTIGGVVWLLVPFI), and 401 to 421 (IFTIFGILVLAFLLINTYRVY). Heme b-binding residues include histidine 261 and histidine 276.

This sequence belongs to the cytochrome b family. Requires heme b as cofactor.

The protein resides in the cell inner membrane. Its function is as follows. Component of the green S-bacteria bc complex, which consists of the Rieske protein and cytochrome b subunit but appears to lack a cytochrome c1-equivalent. This complex has a comparatively low redox potential. The chain is Cytochrome bc complex cytochrome b subunit (petB) from Chlorobaculum thiosulfatiphilum (Chlorobium limicola f.sp. thiosulfatophilum).